Here is a 91-residue protein sequence, read N- to C-terminus: Cell division topological specificity factor (91 aa).

Belongs to the MinE family.

Functionally, prevents the cell division inhibition by proteins MinC and MinD at internal division sites while permitting inhibition at polar sites. This ensures cell division at the proper site by restricting the formation of a division septum at the midpoint of the long axis of the cell. The protein is Cell division topological specificity factor of Caldanaerobacter subterraneus subsp. tengcongensis (strain DSM 15242 / JCM 11007 / NBRC 100824 / MB4) (Thermoanaerobacter tengcongensis).